The following is a 34-amino-acid chain: Photosystem II reaction center protein M (34 aa).

Residues 5–25 form a helical membrane-spanning segment; it reads ILAFIATALFILIPTAFLLII.

It belongs to the PsbM family. In terms of assembly, PSII is composed of 1 copy each of membrane proteins PsbA, PsbB, PsbC, PsbD, PsbE, PsbF, PsbH, PsbI, PsbJ, PsbK, PsbL, PsbM, PsbT, PsbX, PsbY, PsbZ, Psb30/Ycf12, at least 3 peripheral proteins of the oxygen-evolving complex and a large number of cofactors. It forms dimeric complexes.

The protein localises to the plastid. It is found in the chloroplast thylakoid membrane. Its function is as follows. One of the components of the core complex of photosystem II (PSII). PSII is a light-driven water:plastoquinone oxidoreductase that uses light energy to abstract electrons from H(2)O, generating O(2) and a proton gradient subsequently used for ATP formation. It consists of a core antenna complex that captures photons, and an electron transfer chain that converts photonic excitation into a charge separation. This subunit is found at the monomer-monomer interface. This chain is Photosystem II reaction center protein M, found in Lolium perenne (Perennial ryegrass).